Consider the following 575-residue polypeptide: MRAWTGSWRWIMLILFAWGTLLFYIGGHLVRDNDHPDHSSRELSKILAKLERLKQQNEDLRRMAESLRIPEGPIDQGTATGRVRVLEEQLVKAKEQIENYKKQARNGLGKDHELLRRRIENGAKELWFFLQSELKKLKHLEGNELQRHADEILLDLGHHERSIMTDLYYLSQTDGAGDWREKEAKDLTELVQRRITYLQNPKDCSKARKLVCNINKGCGYGCQLHHVVYCFMIAYGTQRTLILESQNWRYATGGWETVFRPVSETCTDRSGLSTGHWSGEVNDKNIQVVELPIVDSLHPRPPYLPLAVPEDLADRLVRVHGDPAVWWVSQFVKYLIRPQPWLEKEIEEATKKLGFKHPVIGVHVRRTDKVGTEAAFHPIEEYMVHVEEHFQLLARRMQVDKKRVYLATDDPALLKEAKTKYSNYEFISDNSISWSAGLHNRYTENSLRGVILDIHFLSQADFLVCTFSSQVCRVAYEIMQTLHPDASANFHSLDDIYYFGGQNAHNQIAVYPHKPRTDEEIPMEPGDIIGVAGNHWDGYSKGVNRKLGKTGLYPSYKVREKIETVKYPTYPEAEK.

At methionine 1–arginine 9 the chain is on the cytoplasmic side. The chain crosses the membrane as a helical; Signal-anchor for type II membrane protein span at residues tryptophan 10–valine 30. Over arginine 31–lysine 575 the chain is Lumenal. Intrachain disulfides connect cysteine 204–cysteine 266, cysteine 212–cysteine 230, and cysteine 218–cysteine 222. Positions lysine 206–leucine 493 constitute a GT23 domain. Serine 278 is modified (phosphoserine). The short motif at proline 299 to proline 305 is the SH3-binding element. Residues arginine 365–arginine 366 are important for donor substrate binding. An intrachain disulfide couples cysteine 465 to cysteine 472. The 62-residue stretch at glutamine 502–glutamate 563 folds into the SH3 domain.

It belongs to the glycosyltransferase 23 family. In terms of processing, tyrosine phosphorylated by PKDCC/VLK.

Its subcellular location is the golgi apparatus. The protein localises to the golgi stack membrane. It catalyses the reaction N(4)-{beta-D-GlcNAc-(1-&gt;2)-alpha-D-Man-(1-&gt;3)-[beta-D-GlcNAc-(1-&gt;2)-alpha-D-Man-(1-&gt;6)]-beta-D-Man-(1-&gt;4)-beta-D-GlcNAc-(1-&gt;4)-beta-D-GlcNAc}-L-asparaginyl-[protein] + GDP-beta-L-fucose = an N(4)-{beta-D-GlcNAc-(1-&gt;2)-alpha-D-Man-(1-&gt;3)-[beta-D-GlcNAc-(1-&gt;2)-alpha-D-Man-(1-&gt;6)]-beta-D-Man-(1-&gt;4)-beta-D-GlcNAc-(1-&gt;4)-[alpha-L-Fuc-(1-&gt;6)]-beta-D-GlcNAc}-L-asparaginyl-[protein] + GDP + H(+). It functions in the pathway protein modification; protein glycosylation. Its function is as follows. Catalyzes the addition of fucose in alpha 1-6 linkage to the first GlcNAc residue, next to the peptide chains in N-glycans. The protein is Alpha-(1,6)-fucosyltransferase (Fut8) of Rattus norvegicus (Rat).